The sequence spans 157 residues: 6,7-dimethyl-8-ribityllumazine synthase (157 aa).

Residues phenylalanine 22, 56–58 (AFE), and 81–83 (VLI) each bind 5-amino-6-(D-ribitylamino)uracil. 86–87 (ET) serves as a coordination point for (2S)-2-hydroxy-3-oxobutyl phosphate. The active-site Proton donor is histidine 89. Phenylalanine 114 serves as a coordination point for 5-amino-6-(D-ribitylamino)uracil. A (2S)-2-hydroxy-3-oxobutyl phosphate-binding site is contributed by arginine 128.

The protein belongs to the DMRL synthase family.

The enzyme catalyses (2S)-2-hydroxy-3-oxobutyl phosphate + 5-amino-6-(D-ribitylamino)uracil = 6,7-dimethyl-8-(1-D-ribityl)lumazine + phosphate + 2 H2O + H(+). Its pathway is cofactor biosynthesis; riboflavin biosynthesis; riboflavin from 2-hydroxy-3-oxobutyl phosphate and 5-amino-6-(D-ribitylamino)uracil: step 1/2. In terms of biological role, catalyzes the formation of 6,7-dimethyl-8-ribityllumazine by condensation of 5-amino-6-(D-ribitylamino)uracil with 3,4-dihydroxy-2-butanone 4-phosphate. This is the penultimate step in the biosynthesis of riboflavin. This Chlamydia muridarum (strain MoPn / Nigg) protein is 6,7-dimethyl-8-ribityllumazine synthase.